The primary structure comprises 372 residues: Silphinene synthase peniA (372 aa).

Mg(2+) is bound by residues aspartate 116, glutamate 121, asparagine 263, serine 267, and glutamate 271. Residues 116-121 (DDQFDE) carry the DDXXE motif motif.

Belongs to the terpene synthase family. Mg(2+) is required as a cofactor.

The catalysed reaction is (2E,6E)-farnesyl diphosphate = silphinene + diphosphate. The protein operates within secondary metabolite biosynthesis; terpenoid biosynthesis. In terms of biological role, sesquiterpene cyclase; part of the gene cluster that mediates the biosynthesis of penifulvin A, a potent insecticidal sesquiterpene that features a [5.5.5.6]dioxafenestrane ring. Within the pathway, peniA catalyzes the first step and generates the angular triquinane scaffold silphinene via cyclization of the linear farnesyl pyrophosphate (FPP). The cytochrome P450 monooxygenase peniB and the flavin-dependent monooxygenase peniC then catalyze a series of oxidation reactions to transform silphinene into penifulvin A. This Penicillium patulum (Penicillium griseofulvum) protein is Silphinene synthase peniA.